Reading from the N-terminus, the 119-residue chain is Toxin ICK-9 (119 aa).

The N-terminal stretch at 1-19 (MMKLYSLVIIATLAAAAFA) is a signal peptide. Cystine bridges form between cysteine 59–cysteine 74, cysteine 67–cysteine 80, cysteine 71–cysteine 116, and cysteine 73–cysteine 87.

Belongs to the neurotoxin 25 family. ICK-8 subfamily. As to expression, expressed by the venom gland.

It localises to the secreted. Ion channel inhibitor. The sequence is that of Toxin ICK-9 from Trittame loki (Brush-footed trapdoor spider).